Reading from the N-terminus, the 432-residue chain is Adenylosuccinate synthetase (432 aa).

GTP is bound by residues 13-19 (GDEGKGK) and 41-43 (GHT). Residue aspartate 14 is the Proton acceptor of the active site. Mg(2+)-binding residues include aspartate 14 and glycine 41. IMP contacts are provided by residues 14–17 (DEGK), 39–42 (NAGH), threonine 130, arginine 144, glutamine 225, threonine 240, and arginine 304. The active-site Proton donor is the histidine 42. Substrate is bound at residue 300 to 306 (ATTGRRR). GTP is bound by residues arginine 306, 332–334 (KLD), and 415–417 (STG).

Belongs to the adenylosuccinate synthetase family. As to quaternary structure, homodimer. Requires Mg(2+) as cofactor.

The protein localises to the cytoplasm. It catalyses the reaction IMP + L-aspartate + GTP = N(6)-(1,2-dicarboxyethyl)-AMP + GDP + phosphate + 2 H(+). It participates in purine metabolism; AMP biosynthesis via de novo pathway; AMP from IMP: step 1/2. Plays an important role in the de novo pathway of purine nucleotide biosynthesis. Catalyzes the first committed step in the biosynthesis of AMP from IMP. In Enterobacter sp. (strain 638), this protein is Adenylosuccinate synthetase.